We begin with the raw amino-acid sequence, 454 residues long: tRNA modification GTPase MnmE (454 aa).

(6S)-5-formyl-5,6,7,8-tetrahydrofolate contacts are provided by arginine 23, glutamate 80, and lysine 120. The 162-residue stretch at 216–377 (GMKVVIAGRP…LRNHLKQSMG (162 aa)) folds into the TrmE-type G domain. Asparagine 226 provides a ligand contact to K(+). GTP is bound by residues 226-231 (NAGKSS), 245-251 (TDIAGTT), 270-273 (DTAG), 335-338 (NKAD), and 358-360 (SAR). Serine 230 is a Mg(2+) binding site. K(+)-binding residues include threonine 245, isoleucine 247, and threonine 250. Threonine 251 provides a ligand contact to Mg(2+). Lysine 454 is a binding site for (6S)-5-formyl-5,6,7,8-tetrahydrofolate.

The protein belongs to the TRAFAC class TrmE-Era-EngA-EngB-Septin-like GTPase superfamily. TrmE GTPase family. In terms of assembly, homodimer. Heterotetramer of two MnmE and two MnmG subunits. The cofactor is K(+).

It localises to the cytoplasm. Exhibits a very high intrinsic GTPase hydrolysis rate. Involved in the addition of a carboxymethylaminomethyl (cmnm) group at the wobble position (U34) of certain tRNAs, forming tRNA-cmnm(5)s(2)U34. The polypeptide is tRNA modification GTPase MnmE (Escherichia coli O127:H6 (strain E2348/69 / EPEC)).